A 313-amino-acid chain; its full sequence is MDNKKRLAYAIIQFLHDQLRHGGLSSDAQESLEVAIQCLETAFGVTVEDSDLALPQTLPEIFEAAATGKEMPQDLRSPARTPPSEEDSAEAERLKTEGNEQMKVENFEAAVHFYGKAIELNPANAVYFCNRAAAYSKLGNYAGAVQDCERAICIDPAYSKAYGRMGLALSSLNKHVEAVAYYKKALELDPDNETYKSNLKIAELKLREAPSPTGGVGSFDIAGLLNNPGFMSMASNLMNNPQIQQLMSGMISGGNNPLGTPGTSPSQNDLASLIQAGQQFAQQMQQQNPELIEQLRSQIRSRTPSASNDDQQE.

Positions 66–100 (ATGKEMPQDLRSPARTPPSEEDSAEAERLKTEGNE) are disordered. Phosphoserine is present on Ser-77. Thr-81 is modified (phosphothreonine). Ser-84 bears the Phosphoserine mark. Residues 90–100 (EAERLKTEGNE) show a composition bias toward basic and acidic residues. 3 TPR repeats span residues 91–124 (AERLKTEGNEQMKVENFEAAVHFYGKAIELNPAN), 125–158 (AVYFCNRAAAYSKLGNYAGAVQDCERAICIDPAY), and 159–192 (SKAYGRMGLALSSLNKHVEAVAYYKKALELDPDN). N6-acetyllysine is present on Lys-137. The interval 250–269 (MISGGNNPLGTPGTSPSQND) is disordered. At Ser-301 the chain carries Phosphoserine. A Phosphothreonine modification is found at Thr-303. The residue at position 305 (Ser-305) is a Phosphoserine.

The protein belongs to the SGT family. Homodimer. Homooligomer. Interacts with DNAJC5 and DNAJC5B. Interacts (via TPR repeats) with HSP90AA1. Interacts (via Gln-rich region) with SLC2A1. Interacts with HSP90AB1. Interacts (via TPR repeats) with HSPA8/Hsc70; the interaction is direct. Interacts with BAG6 (via ubiquitin-like domain); interaction prevents interaction between BAG6 and RNF126. Forms a multiprotein complex, at least composed of DNAJB12, DNAJB14, HSPA8/Hsc70 and SGTA; interaction with DNAJB14 and HSPA8/Hsc70 is direct. As to quaternary structure, (Microbial infection) Interacts with Vpu and Gag from HIV-1. In terms of assembly, (Microbial infection) Interacts with SARS-CoV accessory protein 7a. In terms of tissue distribution, ubiquitous.

It localises to the cytoplasm. The protein resides in the nucleus. Its function is as follows. Co-chaperone that binds misfolded and hydrophobic patches-containing client proteins in the cytosol. Mediates their targeting to the endoplasmic reticulum but also regulates their sorting to the proteasome when targeting fails. Functions in tail-anchored/type II transmembrane proteins membrane insertion constituting with ASNA1 and the BAG6 complex a targeting module. Functions upstream of the BAG6 complex and ASNA1, binding more rapidly the transmembrane domain of newly synthesized proteins. It is also involved in the regulation of the endoplasmic reticulum-associated misfolded protein catabolic process via its interaction with BAG6: collaborates with the BAG6 complex to maintain hydrophobic substrates in non-ubiquitinated states. Competes with RNF126 for interaction with BAG6, preventing the ubiquitination of client proteins associated with the BAG6 complex. Binds directly to HSC70 and HSP70 and regulates their ATPase activity. Functionally, (Microbial infection) In case of infection by polyomavirus, involved in the virus endoplasmic reticulum membrane penetration and infection via interaction with DNAJB12, DNAJB14 and HSPA8/Hsc70. The protein is Small glutamine-rich tetratricopeptide repeat-containing protein alpha (SGTA) of Homo sapiens (Human).